The sequence spans 183 residues: Archaemetzincin (183 aa).

Residue histidine 132 participates in Zn(2+) binding. The Proton acceptor role is filled by glutamate 133. Positions 136, 142, 143, 148, 167, and 170 each coordinate Zn(2+).

Belongs to the peptidase M54 family. Monomer. The cofactor is Zn(2+).

Its function is as follows. Probable zinc metalloprotease whose natural substrate is unknown. In Aeropyrum pernix (strain ATCC 700893 / DSM 11879 / JCM 9820 / NBRC 100138 / K1), this protein is Archaemetzincin.